The following is a 413-amino-acid chain: Serine hydroxymethyltransferase (413 aa).

Residues Leu-119 and Gly-123–Leu-125 each bind (6S)-5,6,7,8-tetrahydrofolate. Lys-228 is modified (N6-(pyridoxal phosphate)lysine). (6S)-5,6,7,8-tetrahydrofolate is bound at residue Ser-351–Phe-353.

The protein belongs to the SHMT family. Homodimer. Requires pyridoxal 5'-phosphate as cofactor.

Its subcellular location is the cytoplasm. It carries out the reaction (6R)-5,10-methylene-5,6,7,8-tetrahydrofolate + glycine + H2O = (6S)-5,6,7,8-tetrahydrofolate + L-serine. The protein operates within one-carbon metabolism; tetrahydrofolate interconversion. It functions in the pathway amino-acid biosynthesis; glycine biosynthesis; glycine from L-serine: step 1/1. Its function is as follows. Catalyzes the reversible interconversion of serine and glycine with tetrahydrofolate (THF) serving as the one-carbon carrier. This reaction serves as the major source of one-carbon groups required for the biosynthesis of purines, thymidylate, methionine, and other important biomolecules. Also exhibits THF-independent aldolase activity toward beta-hydroxyamino acids, producing glycine and aldehydes, via a retro-aldol mechanism. The sequence is that of Serine hydroxymethyltransferase from Clostridium botulinum (strain Okra / Type B1).